Consider the following 131-residue polypeptide: Small ribosomal subunit protein uS8 (131 aa).

This sequence belongs to the universal ribosomal protein uS8 family. In terms of assembly, part of the 30S ribosomal subunit. Contacts proteins S5 and S12.

Its function is as follows. One of the primary rRNA binding proteins, it binds directly to 16S rRNA central domain where it helps coordinate assembly of the platform of the 30S subunit. The chain is Small ribosomal subunit protein uS8 from Polaromonas sp. (strain JS666 / ATCC BAA-500).